We begin with the raw amino-acid sequence, 225 residues long: Octanoyltransferase (225 aa).

The region spanning 29–210 (PDTDDEIWVV…RLIAHLDGAT (182 aa)) is the BPL/LPL catalytic domain. Substrate is bound by residues 69–76 (RGGQITYH), 141–143 (ALG), and 154–156 (GLS). Cys-172 functions as the Acyl-thioester intermediate in the catalytic mechanism.

It belongs to the LipB family.

The protein localises to the cytoplasm. The enzyme catalyses octanoyl-[ACP] + L-lysyl-[protein] = N(6)-octanoyl-L-lysyl-[protein] + holo-[ACP] + H(+). It functions in the pathway protein modification; protein lipoylation via endogenous pathway; protein N(6)-(lipoyl)lysine from octanoyl-[acyl-carrier-protein]: step 1/2. Its function is as follows. Catalyzes the transfer of endogenously produced octanoic acid from octanoyl-acyl-carrier-protein onto the lipoyl domains of lipoate-dependent enzymes. Lipoyl-ACP can also act as a substrate although octanoyl-ACP is likely to be the physiological substrate. The polypeptide is Octanoyltransferase (Burkholderia pseudomallei (strain K96243)).